The primary structure comprises 383 residues: Insecticidal crystal protein Cry35Ab1 (383 aa).

The Ricin B-type lectin domain maps to 26 to 138 (DDSGVSLMNK…NNPNQQWNLT (113 aa)).

Belongs to the toxin_10 family. As to quaternary structure, monomer in solution. Copurifies from parasporal inclusion bodies with Cry34Ab1. Post-translationally, proteolytic processing occurs near the C-terminus yielding a stable protein of approximately 40 kDa; this may be the active form of the protein.

Its function is as follows. Component of a binary insecticidal toxin active on western corn rootworm (WCR, Diabrotica virgifera subsp. virgifera Le Conte) and probably also on northern corn rootworm (D.barberi). Both proteins are required for maximal toxicity. The larval midgut epithelium is probably the primary target. This protein alone has no activity against southern corn rootworm (Diabrotica undecimpunctata howardi Barber), but it synergizes the toxic effect of its Cry34Ab1 partner. The 2 proteins individually and together form ion channels; channels made in the presence of the 2 proteins have higher conductance. Binds to WCR third instar midgut brush border membrane vesicles; binding improves over 10-fold in the presence of Cry34Ab1. This Bacillus thuringiensis protein is Insecticidal crystal protein Cry35Ab1.